A 470-amino-acid polypeptide reads, in one-letter code: 3-isopropylmalate dehydratase large subunit (470 aa).

[4Fe-4S] cluster contacts are provided by C349, C410, and C413.

Belongs to the aconitase/IPM isomerase family. LeuC type 1 subfamily. As to quaternary structure, heterodimer of LeuC and LeuD. [4Fe-4S] cluster is required as a cofactor.

It carries out the reaction (2R,3S)-3-isopropylmalate = (2S)-2-isopropylmalate. The protein operates within amino-acid biosynthesis; L-leucine biosynthesis; L-leucine from 3-methyl-2-oxobutanoate: step 2/4. Catalyzes the isomerization between 2-isopropylmalate and 3-isopropylmalate, via the formation of 2-isopropylmaleate. The polypeptide is 3-isopropylmalate dehydratase large subunit (Nitrosomonas europaea (strain ATCC 19718 / CIP 103999 / KCTC 2705 / NBRC 14298)).